The following is a 263-amino-acid chain: Glucosamine-6-phosphate deaminase (263 aa).

Residue D67 is the Proton acceptor; for enolization step of the active site. N136 acts as the For ring-opening step in catalysis. The Proton acceptor; for ring-opening step role is filled by H138. Residue E143 is the For ring-opening step of the active site.

This sequence belongs to the glucosamine/galactosamine-6-phosphate isomerase family. NagB subfamily. Homohexamer.

The catalysed reaction is alpha-D-glucosamine 6-phosphate + H2O = beta-D-fructose 6-phosphate + NH4(+). Its pathway is amino-sugar metabolism; N-acetylneuraminate degradation; D-fructose 6-phosphate from N-acetylneuraminate: step 5/5. Catalyzes the reversible isomerization-deamination of glucosamine 6-phosphate (GlcN6P) to form fructose 6-phosphate (Fru6P) and ammonium ion. The chain is Glucosamine-6-phosphate deaminase from Shewanella halifaxensis (strain HAW-EB4).